Reading from the N-terminus, the 122-residue chain is Large ribosomal subunit protein uL18 (122 aa).

This sequence belongs to the universal ribosomal protein uL18 family. In terms of assembly, part of the 50S ribosomal subunit; part of the 5S rRNA/L5/L18/L25 subcomplex. Contacts the 5S and 23S rRNAs.

This is one of the proteins that bind and probably mediate the attachment of the 5S RNA into the large ribosomal subunit, where it forms part of the central protuberance. In Thermotoga petrophila (strain ATCC BAA-488 / DSM 13995 / JCM 10881 / RKU-1), this protein is Large ribosomal subunit protein uL18.